A 224-amino-acid polypeptide reads, in one-letter code: Ribonuclease T (224 aa).

The 175-residue stretch at 32-206 (VVVDVETGGF…YDTEKTAELF (175 aa)) folds into the Exonuclease domain. Mg(2+) contacts are provided by aspartate 35, glutamate 37, histidine 193, and aspartate 198. Residue histidine 193 is the Proton donor/acceptor of the active site.

This sequence belongs to the RNase T family. Homodimer. Mg(2+) serves as cofactor.

Functionally, trims short 3' overhangs of a variety of RNA species, leaving a one or two nucleotide 3' overhang. Responsible for the end-turnover of tRNA: specifically removes the terminal AMP residue from uncharged tRNA (tRNA-C-C-A). Also appears to be involved in tRNA biosynthesis. This Pseudomonas fluorescens (strain Pf0-1) protein is Ribonuclease T.